Reading from the N-terminus, the 186-residue chain is Probable peptidyl-tRNA hydrolase 2 (186 aa).

This sequence belongs to the PTH2 family.

The catalysed reaction is an N-acyl-L-alpha-aminoacyl-tRNA + H2O = an N-acyl-L-amino acid + a tRNA + H(+). Its function is as follows. The natural substrate for this enzyme may be peptidyl-tRNAs which drop off the ribosome during protein synthesis. This chain is Probable peptidyl-tRNA hydrolase 2, found in Drosophila melanogaster (Fruit fly).